The sequence spans 30 residues: Photosystem I reaction center subunit XII (30 aa).

A helical transmembrane segment spans residues 7-29 (IYTVLCIALLAGILAIRLGSTLY).

It belongs to the PsaM family.

The protein localises to the plastid. It localises to the chloroplast thylakoid membrane. The chain is Photosystem I reaction center subunit XII from Phaeodactylum tricornutum (strain CCAP 1055/1).